The primary structure comprises 131 residues: Single-stranded DNA-binding protein 2 (131 aa).

Residues 1–103 (MYNKVIMIGR…VLASSFQLLE (103 aa)) enclose the SSB domain. The short motif at 126-131 (EEELPF) is the Important for interaction with partner proteins element.

As to quaternary structure, homotetramer.

In terms of biological role, plays an important role in DNA replication, recombination and repair. Binds to ssDNA and to an array of partner proteins to recruit them to their sites of action during DNA metabolism. The sequence is that of Single-stranded DNA-binding protein 2 (ssb2) from Streptococcus agalactiae serotype III (strain NEM316).